The sequence spans 625 residues: MWKTARDSVCLICRSAATTTTSTSARASLEPWAGQRTFSTRREQRPSRMVLSDRVARPPPVRGPGEGNKKPRNKPDGPWAGMNRRVANIDPRKAPKPKPVEEDSRRDKRDKNTKGQKALKMQRALATISYGQRTSIKERMQEIQAFDQFDLLPVVKEAIAQEALKGMTEIKPTPVQRLAIPALLGQPMGRKPRRPKSDNGREEFLLAAETGSGKTLAYLVPAVNAIKKGDADDELVASYNERLAAEKERRGGAPVSEWIEKFEPHPNTARPRVVVLVPTAELVDQVTSVAKKLAHYTKFKVRPLSASISPLRNQRNLYSPIGVDMIVSTPHLLATIAKSDPNVLSRVSHLVIDEADSLLDRSFSGDTTSIVDRAMPSLKQLILCSATIPRRLDTYMEEQFPYINRITTPNLHAIPRRVQLGVIDVSKDPYRNNKMLACADAIWSIGKEAAKHEGPKSEIDVKRIMVFVNERETTQQVADYLVSKGIDAIALHRDTEEHRKSEMLASFTSNEPMKISRPADDDVAAAAAEGGKAGGAVSSSPTRRHLPNTKVIVATDLASRGIDTLAVRYVVLYDVPHTTIDFIHRLGRAGRMNRRGRGIVLVGKDDRRDVVAEVKESMFMGQALV.

A mitochondrion-targeting transit peptide spans 1–16; it reads MWKTARDSVCLICRSA. A compositionally biased stretch (low complexity) spans 19–28; sequence TTTSTSARAS. The tract at residues 19–119 is disordered; sequence TTTSTSARAS…DKNTKGQKAL (101 aa). Residues 90-113 show a composition bias toward basic and acidic residues; it reads DPRKAPKPKPVEEDSRRDKRDKNT. The Q motif signature appears at 144 to 177; the sequence is QAFDQFDLLPVVKEAIAQEALKGMTEIKPTPVQR. Residues 195-406 enclose the Helicase ATP-binding domain; it reads PKSDNGREEF…EEQFPYINRI (212 aa). Residue 208-215 participates in ATP binding; that stretch reads AETGSGKT. Positions 353–356 match the DEAD box motif; it reads DEAD. The Helicase C-terminal domain maps to 453–625; sequence EGPKSEIDVK…ESMFMGQALV (173 aa).

Belongs to the DEAD box helicase family. MRH4 subfamily.

It localises to the mitochondrion. The catalysed reaction is ATP + H2O = ADP + phosphate + H(+). Functionally, ATP-binding RNA helicase involved in mitochondrial RNA metabolism. Required for maintenance of mitochondrial DNA. The polypeptide is ATP-dependent RNA helicase mrh4, mitochondrial (drh-15) (Neurospora crassa (strain ATCC 24698 / 74-OR23-1A / CBS 708.71 / DSM 1257 / FGSC 987)).